Reading from the N-terminus, the 425-residue chain is MDIGPKDKISNLPEALICHILSFLPIEDSALTSVLSKRWRYLFAFRPNLVFDDSVCLRPPCGHGVIPDYVTSWILNVLERGVLDLDLQVNVNGVRLPSKVFVSKSLVRLRIESGNVRGIDVDDVFLPKLKSLYLHTIMLGKGEDCFEKLTSGCHVLEELVLNNVYSNVWNRSVSSKTLKRLTLWCTESYDKNPHSVLFDTPNLVYLKYSDYVAAKYPKVNFSSLVDATIGLAMTSDQDANASYDALVGNATDFLMGICNVQILCLSANSLAVLTFCCESIPVFNNLIQLTIKTNQSVGWESLPALLKNCPILETLVFEGLLHMYTIKCGDVDGCLCKYSGEVPSCLSSSPVKVLKILRFGEYGIVNQIEMIKIFLETMPHLEQLTVYYNTPIGGDLIEEVSSQLKNFAREASPNCEIQVIPDVLS.

Residues 6–54 enclose the F-box domain; that stretch reads KDKISNLPEALICHILSFLPIEDSALTSVLSKRWRYLFAFRPNLVFDDS. LRR repeat units follow at residues 86–113, 138–163, 185–210, 264–293, and 294–319; these read DLQV…RIES, MLGK…VLNN, CTES…KYSD, CLSA…TIKT, and NQSV…VFEG.

This is F-box/LRR-repeat protein At3g59250 from Arabidopsis thaliana (Mouse-ear cress).